Consider the following 176-residue polypeptide: Large ribosomal subunit protein uL16 (176 aa).

It belongs to the universal ribosomal protein uL16 family.

The sequence is that of Large ribosomal subunit protein uL16 from Picrophilus torridus (strain ATCC 700027 / DSM 9790 / JCM 10055 / NBRC 100828 / KAW 2/3).